The sequence spans 324 residues: Aldo-keto reductase family 1 member A1 (324 aa).

Ser3 carries the post-translational modification Phosphoserine. NADP(+) is bound by residues 10–19 (GQKMPLIGLG), Thr20, and Trp21. A Phosphoserine modification is found at Ser37. Asp44 serves as a coordination point for NADP(+). Tyr49 serves as the catalytic Proton donor. N6-acetyllysine; alternate is present on Lys126. Lys126 bears the N6-succinyllysine; alternate mark. Residue Lys144 is modified to N6-succinyllysine. Ser161, Asn162, Ser210, Leu212, Ser214, Ser215, Lys262, Ser263, Ile264, Thr265, Arg268, Gln271, and Asn272 together coordinate NADP(+). Phosphoserine is present on Ser210.

The protein belongs to the aldo/keto reductase family.

The protein localises to the cytoplasm. Its subcellular location is the cytosol. It is found in the apical cell membrane. The enzyme catalyses a primary alcohol + NADP(+) = an aldehyde + NADPH + H(+). It carries out the reaction L-gulonate + NADP(+) = aldehydo-D-glucuronate + NADPH + H(+). The catalysed reaction is L-gulono-1,4-lactone + NADP(+) = D-glucurono-3,6-lactone + NADPH + H(+). It catalyses the reaction allyl alcohol + NADP(+) = acrolein + NADPH + H(+). The enzyme catalyses glycerol + NADP(+) = D-glyceraldehyde + NADPH + H(+). It carries out the reaction glycerol + NADP(+) = L-glyceraldehyde + NADPH + H(+). The catalysed reaction is hydroxyacetone + NADP(+) = methylglyoxal + NADPH + H(+). It catalyses the reaction 3-deoxyfructose + NADP(+) = 3-deoxyglucosone + NADPH + H(+). The enzyme catalyses (R)-mevalonate + NADP(+) = (R)-mevaldate + NADPH + H(+). It carries out the reaction S-nitroso-CoA + NADPH + H(+) = sulfinamide-CoA + NADP(+). The catalysed reaction is S-nitrosoglutathione + NADPH + H(+) = S-(hydroxysulfenamide)glutathione + NADP(+). In terms of biological role, catalyzes the NADPH-dependent reduction of a wide variety of carbonyl-containing compounds to their corresponding alcohols. Displays enzymatic activity towards endogenous metabolites such as aromatic and aliphatic aldehydes, ketones, monosaccharides and bile acids, with a preference for negatively charged substrates, such as glucuronate and succinic semialdehyde. Plays an important role by catalyzing the reduction of D-glucuronic acid and D-glucurono-gamma-lactone. Functions as a detoxifiying enzyme by reducing a range of toxic aldehydes. Reduces methylglyoxal and 3-deoxyglucosone, which are present at elevated levels under hyperglycemic conditions and are cytotoxic. Involved also in the detoxification of lipid-derived aldehydes like acrolein. Plays a role in the activation of procarcinogens, such as polycyclic aromatic hydrocarbon trans-dihydrodiols, and in the metabolism of various xenobiotics and drugs. Also acts as an inhibitor of protein S-nitrosylation by mediating degradation of S-nitroso-coenzyme A (S-nitroso-CoA), a cofactor required to S-nitrosylate proteins. S-nitroso-CoA reductase activity is involved in reprogramming intermediary metabolism in renal proximal tubules, notably by inhibiting protein S-nitrosylation of isoform 2 of PKM (PKM2). Also acts as a S-nitroso-glutathione reductase by catalyzing the NADPH-dependent reduction of S-nitrosoglutathione. Displays no reductase activity towards retinoids. In Cricetulus griseus (Chinese hamster), this protein is Aldo-keto reductase family 1 member A1 (AKR1A1).